We begin with the raw amino-acid sequence, 62 residues long: UPF0291 protein CLJ_B2839 (62 aa).

This sequence belongs to the UPF0291 family.

Its subcellular location is the cytoplasm. The polypeptide is UPF0291 protein CLJ_B2839 (Clostridium botulinum (strain 657 / Type Ba4)).